Here is a 154-residue protein sequence, read N- to C-terminus: Ribosome maturation factor RimP (154 aa).

This sequence belongs to the RimP family.

Its subcellular location is the cytoplasm. Its function is as follows. Required for maturation of 30S ribosomal subunits. The sequence is that of Ribosome maturation factor RimP from Finegoldia magna (strain ATCC 29328 / DSM 20472 / WAL 2508) (Peptostreptococcus magnus).